The primary structure comprises 224 residues: Response regulator protein GraR (224 aa).

Residues 2 to 115 (DILLVEDDMT…VLIAKLQAIY (114 aa)) enclose the Response regulatory domain. Residue D51 is modified to 4-aspartylphosphate. Residues 126-224 (KRVLSWQDAI…KIGKGYMAHG (99 aa)) constitute a DNA-binding region (ompR/PhoB-type).

In terms of processing, phosphorylated by GraS.

It is found in the cytoplasm. Functionally, member of the two-component regulatory system GraR/GraS involved in resistance against cationic antimicrobial peptides (CAMPs). The polypeptide is Response regulator protein GraR (graR) (Staphylococcus saprophyticus subsp. saprophyticus (strain ATCC 15305 / DSM 20229 / NCIMB 8711 / NCTC 7292 / S-41)).